A 115-amino-acid polypeptide reads, in one-letter code: U3-lycotoxin-Ls1b (115 aa).

The first 20 residues, 1–20 (MKFVLLFGVLLVTLFSYSSA), serve as a signal peptide directing secretion. A propeptide spanning residues 21–44 (EMLDDFDQADEDELLSLIEKEEAR) is cleaved from the precursor. Intrachain disulfides connect cysteine 48/cysteine 63, cysteine 55/cysteine 72, cysteine 62/cysteine 87, and cysteine 74/cysteine 85.

Belongs to the neurotoxin 19 (CSTX) family. 01 subfamily. As to expression, expressed by the venom gland.

It is found in the secreted. In Lycosa singoriensis (Wolf spider), this protein is U3-lycotoxin-Ls1b.